Consider the following 456-residue polypeptide: Cysteine--tRNA ligase (456 aa).

Cys-28 lines the Zn(2+) pocket. The 'HIGH' region signature appears at 30 to 40 (ITVYDHCHLGH). Zn(2+) is bound by residues Cys-209, His-234, and Glu-238. The short motif at 266-270 (KMAKS) is the 'KMSKS' region element. Position 269 (Lys-269) interacts with ATP.

The protein belongs to the class-I aminoacyl-tRNA synthetase family. Monomer. Zn(2+) is required as a cofactor.

It is found in the cytoplasm. It carries out the reaction tRNA(Cys) + L-cysteine + ATP = L-cysteinyl-tRNA(Cys) + AMP + diphosphate. The protein is Cysteine--tRNA ligase of Legionella pneumophila subsp. pneumophila (strain Philadelphia 1 / ATCC 33152 / DSM 7513).